The sequence spans 368 residues: 4-hydroxy-3-methylbut-2-en-1-yl diphosphate synthase (flavodoxin) (368 aa).

[4Fe-4S] cluster is bound by residues cysteine 268, cysteine 271, cysteine 303, and glutamate 310.

Belongs to the IspG family. [4Fe-4S] cluster is required as a cofactor.

The catalysed reaction is (2E)-4-hydroxy-3-methylbut-2-enyl diphosphate + oxidized [flavodoxin] + H2O + 2 H(+) = 2-C-methyl-D-erythritol 2,4-cyclic diphosphate + reduced [flavodoxin]. It functions in the pathway isoprenoid biosynthesis; isopentenyl diphosphate biosynthesis via DXP pathway; isopentenyl diphosphate from 1-deoxy-D-xylulose 5-phosphate: step 5/6. Its function is as follows. Converts 2C-methyl-D-erythritol 2,4-cyclodiphosphate (ME-2,4cPP) into 1-hydroxy-2-methyl-2-(E)-butenyl 4-diphosphate. This is 4-hydroxy-3-methylbut-2-en-1-yl diphosphate synthase (flavodoxin) from Listeria monocytogenes serotype 4b (strain CLIP80459).